Consider the following 237-residue polypeptide: Purine nucleoside phosphorylase DeoD-type (237 aa).

Residue His4 participates in a purine D-ribonucleoside binding. Phosphate-binding positions include Gly20, Arg24, Arg43, and 87-90; that span reads RVGT. A purine D-ribonucleoside contacts are provided by residues 179–181 and 203–204; these read EME and SD. Asp204 acts as the Proton donor in catalysis.

This sequence belongs to the PNP/UDP phosphorylase family. In terms of assembly, homohexamer; trimer of homodimers.

The enzyme catalyses a purine D-ribonucleoside + phosphate = a purine nucleobase + alpha-D-ribose 1-phosphate. It catalyses the reaction a purine 2'-deoxy-D-ribonucleoside + phosphate = a purine nucleobase + 2-deoxy-alpha-D-ribose 1-phosphate. Catalyzes the reversible phosphorolytic breakdown of the N-glycosidic bond in the beta-(deoxy)ribonucleoside molecules, with the formation of the corresponding free purine bases and pentose-1-phosphate. This is Purine nucleoside phosphorylase DeoD-type from Clostridium beijerinckii (strain ATCC 51743 / NCIMB 8052) (Clostridium acetobutylicum).